Consider the following 174-residue polypeptide: Mediator of RNA polymerase II transcription subunit 30 (174 aa).

Residues Val113–Ile166 are a coiled coil.

This sequence belongs to the Mediator complex subunit 30 family. As to quaternary structure, component of the Mediator complex.

The protein localises to the nucleus. Functionally, component of the Mediator complex, a coactivator involved in the regulated transcription of nearly all RNA polymerase II-dependent genes. Mediator functions as a bridge to convey information from gene-specific regulatory proteins to the basal RNA polymerase II transcription machinery. Mediator is recruited to promoters by direct interactions with regulatory proteins and serves as a scaffold for the assembly of a functional preinitiation complex with RNA polymerase II and the general transcription factors. This is Mediator of RNA polymerase II transcription subunit 30 (med30) from Danio rerio (Zebrafish).